The primary structure comprises 102 residues: Small ribosomal subunit protein uS10 (102 aa).

Belongs to the universal ribosomal protein uS10 family. Part of the 30S ribosomal subunit.

In terms of biological role, involved in the binding of tRNA to the ribosomes. The polypeptide is Small ribosomal subunit protein uS10 (Bacillus cereus (strain G9842)).